A 158-amino-acid polypeptide reads, in one-letter code: NAD(P)H-quinone oxidoreductase subunit N (158 aa).

It belongs to the complex I NdhN subunit family. As to quaternary structure, NDH-1 can be composed of about 15 different subunits; different subcomplexes with different compositions have been identified which probably have different functions.

It is found in the cellular thylakoid membrane. The catalysed reaction is a plastoquinone + NADH + (n+1) H(+)(in) = a plastoquinol + NAD(+) + n H(+)(out). It catalyses the reaction a plastoquinone + NADPH + (n+1) H(+)(in) = a plastoquinol + NADP(+) + n H(+)(out). NDH-1 shuttles electrons from an unknown electron donor, via FMN and iron-sulfur (Fe-S) centers, to quinones in the respiratory and/or the photosynthetic chain. The immediate electron acceptor for the enzyme in this species is believed to be plastoquinone. Couples the redox reaction to proton translocation, and thus conserves the redox energy in a proton gradient. Cyanobacterial NDH-1 also plays a role in inorganic carbon-concentration. This chain is NAD(P)H-quinone oxidoreductase subunit N, found in Nostoc punctiforme (strain ATCC 29133 / PCC 73102).